The following is a 59-amino-acid chain: Small ribosomal subunit protein eS30 (59 aa).

Residues 1-35 (KVHGSLARAGKVRGQTPKVAKQEKKKKKTGRAKRR) are disordered. Positions 23-35 (EKKKKKTGRAKRR) are enriched in basic residues. Lys-51 bears the N6-succinyllysine mark.

The protein belongs to the eukaryotic ribosomal protein eS30 family.

The protein is Small ribosomal subunit protein eS30 (Fau) of Mus spicilegus (Steppe mouse).